We begin with the raw amino-acid sequence, 832 residues long: Protein translocase subunit SecA (832 aa).

ATP-binding positions include Gln87, 105–109, and Asp512; that span reads GEGKT.

Belongs to the SecA family. Monomer and homodimer. Part of the essential Sec protein translocation apparatus which comprises SecA, SecYEG and auxiliary proteins SecDF-YajC and YidC.

Its subcellular location is the cell membrane. The protein localises to the cytoplasm. It catalyses the reaction ATP + H2O + cellular proteinSide 1 = ADP + phosphate + cellular proteinSide 2.. Part of the Sec protein translocase complex. Interacts with the SecYEG preprotein conducting channel. Has a central role in coupling the hydrolysis of ATP to the transfer of proteins into and across the cell membrane, serving as an ATP-driven molecular motor driving the stepwise translocation of polypeptide chains across the membrane. The sequence is that of Protein translocase subunit SecA from Wigglesworthia glossinidia brevipalpis.